The chain runs to 369 residues: Glutamate 5-kinase (369 aa).

K8 is a binding site for ATP. S49, D136, and N148 together coordinate substrate. ATP is bound by residues T168 to D169 and T212 to K218. A PUA domain is found at T277–V355.

The protein belongs to the glutamate 5-kinase family.

The protein localises to the cytoplasm. The enzyme catalyses L-glutamate + ATP = L-glutamyl 5-phosphate + ADP. The protein operates within amino-acid biosynthesis; L-proline biosynthesis; L-glutamate 5-semialdehyde from L-glutamate: step 1/2. Its function is as follows. Catalyzes the transfer of a phosphate group to glutamate to form L-glutamate 5-phosphate. This chain is Glutamate 5-kinase, found in Trichormus variabilis (strain ATCC 29413 / PCC 7937) (Anabaena variabilis).